The sequence spans 316 residues: Protoheme IX farnesyltransferase (316 aa).

Transmembrane regions (helical) follow at residues 28–48 (WLALLKPRVISLVVFTGAAGM), 57–77 (IPIGLITILCICIGAGAAGAI), 106–126 (AALVYGVVLSVLSVIVLWLAT), 129–149 (LAADILAFSIFFYSVIYTMWL), 156–176 (NIVIGGAAGAFPPMIGWAATM), 179–199 (MAVLPVAMFAIVFLWTPPHFW), 230–250 (ILIYTFILTAVSLVPSFVHEV), 254–274 (YTVVTSLLDLGFILCAFRVLM), and 296–316 (YSLVYLFLLFCGLLVDRVLIG).

The protein belongs to the UbiA prenyltransferase family. Protoheme IX farnesyltransferase subfamily.

It is found in the cell inner membrane. It carries out the reaction heme b + (2E,6E)-farnesyl diphosphate + H2O = Fe(II)-heme o + diphosphate. The protein operates within porphyrin-containing compound metabolism; heme O biosynthesis; heme O from protoheme: step 1/1. Converts heme B (protoheme IX) to heme O by substitution of the vinyl group on carbon 2 of heme B porphyrin ring with a hydroxyethyl farnesyl side group. The sequence is that of Protoheme IX farnesyltransferase from Gluconobacter oxydans (strain 621H) (Gluconobacter suboxydans).